The primary structure comprises 654 residues: Fructose-1,6-bisphosphatase class 3 (654 aa).

Positions 288–307 are disordered; sequence NPAFKPKKRPDKHERLTQRE. The span at 298–307 shows a compositional bias: basic and acidic residues; it reads DKHERLTQRE.

This sequence belongs to the FBPase class 3 family. Requires Mn(2+) as cofactor.

It catalyses the reaction beta-D-fructose 1,6-bisphosphate + H2O = beta-D-fructose 6-phosphate + phosphate. Its pathway is carbohydrate biosynthesis; gluconeogenesis. The sequence is that of Fructose-1,6-bisphosphatase class 3 from Staphylococcus aureus (strain Mu3 / ATCC 700698).